A 421-amino-acid polypeptide reads, in one-letter code: MASSGLGNGVGTSRSAKGLKSSSSSVDWLTRDLAETRIRDKVETDDERDSEPDIIDGAGAEPGHVIRTTLRGRNGQSRQTVSYISEHVVGTGSFGMVFQAKCRETGEVVAIKKVLQDKRYKNRELQIMQMLDHPNAVALKHSFFSRTDNEEVYLNLVLEFVPETVNRVARSYSRTNQLMPLIYVKLYTYQICRALAYIHNSFGLCHRDIKPQNLLVNPHTHQLKICDFGSAKVLVKGEPNVSYICSRYYRAPELIFGASEYTTAIDIWSTGCVMAELLLGQPLFPGESGVDQLVEIIKVLGTPTREEIKCMNPNYTEFKFPQIKPHPWHKVFQKRLPPEAVDLLCRFFQYSPNLRCTALEACIHPLFDELRDPNTRLPNGRPLPPLFNFKPQELSGIPPEIVNRLVPEHARKQNLFMALHS.

Gly residues predominate over residues Met-1–Val-10. The disordered stretch occupies residues Met-1 to Ala-60. The span at Leu-29 to Val-42 shows a compositional bias: basic and acidic residues. Acidic residues predominate over residues Glu-43–Ile-54. The 285-residue stretch at Tyr-83–Phe-367 folds into the Protein kinase domain. ATP contacts are provided by residues Val-89–Val-97 and Lys-112. Catalysis depends on Asp-208, which acts as the Proton acceptor. A Phosphotyrosine modification is found at Tyr-243.

This sequence belongs to the protein kinase superfamily. CMGC Ser/Thr protein kinase family. GSK-3 subfamily. Post-translationally, autophosphorylated mainly on threonine and serine residues. As to expression, expressed exclusively in inflorescences.

It carries out the reaction L-seryl-[protein] + ATP = O-phospho-L-seryl-[protein] + ADP + H(+). The enzyme catalyses L-threonyl-[protein] + ATP = O-phospho-L-threonyl-[protein] + ADP + H(+). Functionally, may mediate extracellular signals to regulate transcription in differentiating cells. The protein is Shaggy-related protein kinase kappa (ASK10) of Arabidopsis thaliana (Mouse-ear cress).